The chain runs to 529 residues: Bifunctional purine biosynthesis protein PurH (529 aa).

The MGS-like domain maps to 2-149 (TDLSPVRRAL…KNHAFVNVVV (148 aa)).

Belongs to the PurH family.

It catalyses the reaction (6R)-10-formyltetrahydrofolate + 5-amino-1-(5-phospho-beta-D-ribosyl)imidazole-4-carboxamide = 5-formamido-1-(5-phospho-D-ribosyl)imidazole-4-carboxamide + (6S)-5,6,7,8-tetrahydrofolate. The catalysed reaction is IMP + H2O = 5-formamido-1-(5-phospho-D-ribosyl)imidazole-4-carboxamide. It functions in the pathway purine metabolism; IMP biosynthesis via de novo pathway; 5-formamido-1-(5-phospho-D-ribosyl)imidazole-4-carboxamide from 5-amino-1-(5-phospho-D-ribosyl)imidazole-4-carboxamide (10-formyl THF route): step 1/1. Its pathway is purine metabolism; IMP biosynthesis via de novo pathway; IMP from 5-formamido-1-(5-phospho-D-ribosyl)imidazole-4-carboxamide: step 1/1. The protein is Bifunctional purine biosynthesis protein PurH of Ruegeria pomeroyi (strain ATCC 700808 / DSM 15171 / DSS-3) (Silicibacter pomeroyi).